The following is a 172-amino-acid chain: Translation initiation factor IF-3 (172 aa).

Belongs to the IF-3 family. In terms of assembly, monomer.

It is found in the cytoplasm. IF-3 binds to the 30S ribosomal subunit and shifts the equilibrium between 70S ribosomes and their 50S and 30S subunits in favor of the free subunits, thus enhancing the availability of 30S subunits on which protein synthesis initiation begins. The protein is Translation initiation factor IF-3 of Campylobacter jejuni subsp. doylei (strain ATCC BAA-1458 / RM4099 / 269.97).